Reading from the N-terminus, the 72-residue chain is Large ribosomal subunit protein uL29 (72 aa).

It belongs to the universal ribosomal protein uL29 family.

This is Large ribosomal subunit protein uL29 (rpmC) from Chlamydia pneumoniae (Chlamydophila pneumoniae).